The following is a 62-amino-acid chain: Small ribosomal subunit protein eS27 (62 aa).

Zn(2+) is bound by residues Cys17, Cys20, Cys36, and Cys39. The segment at 17 to 39 (CPECNNEQIVFGSPATVVKCLTC) adopts a C4-type zinc-finger fold.

Belongs to the eukaryotic ribosomal protein eS27 family. Part of the 30S ribosomal subunit. Zn(2+) is required as a cofactor.

The polypeptide is Small ribosomal subunit protein eS27 (Methanocaldococcus jannaschii (strain ATCC 43067 / DSM 2661 / JAL-1 / JCM 10045 / NBRC 100440) (Methanococcus jannaschii)).